The chain runs to 904 residues: Protein translocase subunit SecA (904 aa).

ATP is bound by residues glutamine 87, glycine 105–threonine 109, and aspartate 512. The disordered stretch occupies residues leucine 851–glutamine 904. The segment covering lysine 853–glutamate 871 has biased composition (polar residues). 4 residues coordinate Zn(2+): cysteine 888, cysteine 890, cysteine 899, and histidine 900. Residues lysine 894–glutamine 904 are compositionally biased toward basic residues.

This sequence belongs to the SecA family. As to quaternary structure, monomer and homodimer. Part of the essential Sec protein translocation apparatus which comprises SecA, SecYEG and auxiliary proteins SecDF-YajC and YidC. Zn(2+) serves as cofactor.

It localises to the cell inner membrane. Its subcellular location is the cytoplasm. The enzyme catalyses ATP + H2O + cellular proteinSide 1 = ADP + phosphate + cellular proteinSide 2.. Functionally, part of the Sec protein translocase complex. Interacts with the SecYEG preprotein conducting channel. Has a central role in coupling the hydrolysis of ATP to the transfer of proteins into and across the cell membrane, serving both as a receptor for the preprotein-SecB complex and as an ATP-driven molecular motor driving the stepwise translocation of polypeptide chains across the membrane. This Yersinia enterocolitica serotype O:8 / biotype 1B (strain NCTC 13174 / 8081) protein is Protein translocase subunit SecA.